Here is a 237-residue protein sequence, read N- to C-terminus: MKKTLLTLLFGCVVTAQAQDIIVMEPSYPPFEMTEEKGEIIGFDVDIANAICKEMNANCTFHSQPFDSLIQSLKQKQFDAAISGMGITEPRKKQVLFSEPYFPSSAAFIAKKDTDFAKVKTIGVQNGTTYQHYLAKEKKEYNVKSYASYQNAILDVQNGRIDAIFGDVPVLAEMARKHEGLDFVGEKINNPNYFGDGLGIATHLKNQVLVDQFNAALKTIKENGEYQKIYDKWMGGK.

A signal peptide spans 1–18 (MKKTLLTLLFGCVVTAQA).

This sequence belongs to the bacterial solute-binding protein 3 family.

The protein resides in the periplasm. Binds arginine; part of the arginine periplasmic transport system. This is Arginine-binding periplasmic protein (lapT) from Mannheimia haemolytica (Pasteurella haemolytica).